Reading from the N-terminus, the 181-residue chain is UPF0302 protein ABC1905 (181 aa).

Belongs to the UPF0302 family.

The protein is UPF0302 protein ABC1905 of Shouchella clausii (strain KSM-K16) (Alkalihalobacillus clausii).